Reading from the N-terminus, the 833-residue chain is P protein (833 aa).

Residues 1–172 are Cytoplasmic-facing; that stretch reads MRLENKDIRL…QVSKLGCCVR (172 aa). The helical transmembrane segment at 173–193 threads the bilayer; it reads WIKITGLFVFVVLCSILFSLY. At 194 to 325 the chain is on the extracellular side; sequence PDQGKFWQLL…QFLGASVEAQ (132 aa). Residues Asn-210, Asn-214, and Asn-269 are each glycosylated (N-linked (GlcNAc...) asparagine). A helical transmembrane segment spans residues 326-346; that stretch reads VASAVAILAGVYTLIIFEIVH. The Cytoplasmic segment spans residues 347–348; the sequence is RT. The chain crosses the membrane as a helical span at residues 349–369; sequence LAAMLGALAALAALAVVGDRP. The Extracellular portion of the chain corresponds to 370–381; sequence SLTHVVEWIDFE. Residues 382 to 402 form a helical membrane-spanning segment; that stretch reads TLALLFGMMILVAVFSETGFF. At 403-417 the chain is on the cytoplasmic side; sequence DYCAVKAYQLSRGRV. The chain crosses the membrane as a helical span at residues 418-438; the sequence is WAMIFMLCLMAAILSAFLDNV. The Extracellular portion of the chain corresponds to 439 to 501; sequence TTMLLFTPVT…ELRKMGLDFA (63 aa). A helical transmembrane segment spans residues 502–522; the sequence is GFTAHMFLGICLVLLVSFPLL. The Cytoplasmic portion of the chain corresponds to 523–617; it reads RLLYWNKKLY…RKHRISDRSL (95 aa). The chain crosses the membrane as a helical span at residues 618–638; sequence LVKCLTVLGFVISMFFLNSFV. A topological domain (extracellular) is located at residue Pro-639. Residues 640–660 form a helical membrane-spanning segment; sequence GIHLDLGWIAILGAIWLLILA. Topologically, residues 661 to 675 are cytoplasmic; the sequence is DIHDFEIILHRVEWA. A helical membrane pass occupies residues 676 to 696; that stretch reads TLLFFAALFVLMEALTHLHLV. Residues 697–718 lie on the Extracellular side of the membrane; it reads EYVGEQTALLIKMVPEDQRFAA. A helical transmembrane segment spans residues 719–739; it reads AIVLIVWVSALASSLIDNIPF. The Cytoplasmic portion of the chain corresponds to 740–759; that stretch reads TATMIPVLLNLSQDPEISLP. A helical transmembrane segment spans residues 760–780; that stretch reads ALPLMYALALGACLGGNGTLI. At 781–810 the chain is on the extracellular side; it reads GASTNVVCAGIAEKHGYGFSFMEFFRLGFP. Residues 811 to 831 form a helical membrane-spanning segment; the sequence is VMLMSCTIGMCYLLIAHIVVG. Residues 832 to 833 are Cytoplasmic-facing; that stretch reads WN.

It belongs to the CitM (TC 2.A.11) transporter family. As to expression, most abundant in melanocytes. Also present in neonatal and adult eye tissue presumably as a result of expression in the retinal pigmented epithelium and choroid body, known sites of melanogenesis in the eye. Small but detectable amounts also observed in fetal, neonatal and adult brain. Moderate amounts detected in adult testis and ovary. Not detected in heart, kidney, spleen, liver or thymus.

The protein localises to the melanosome membrane. The enzyme catalyses chloride(in) = chloride(out). In terms of biological role, contributes to a melanosome-specific anion (chloride) current that modulates melanosomal pH for optimal tyrosinase activity required for melanogenesis and the melanosome maturation. One of the components of the mammalian pigmentary system. May serve as a key control point at which color variation is determined. Major determinant of eye color. Seems to regulate the post-translational processing of tyrosinase, which catalyzes the limiting reaction in melanin synthesis. The protein is P protein (Oca2) of Mus musculus (Mouse).